The chain runs to 830 residues: Pentatricopeptide repeat-containing protein At5g55740, chloroplastic (830 aa).

The N-terminal 59 residues, 1-59 (MASLPFNTIPNKVPFSVSSKPSSKHHDEQAHSPSSTSYFHRVSSLCKNGEIKEALSLVT), are a transit peptide targeting the chloroplast. The disordered stretch occupies residues 15 to 36 (FSVSSKPSSKHHDEQAHSPSST). PPR repeat units follow at residues 69 to 103 (GPEIYGEILQGCVYERDLSTGKQIHARILKNGDFY), 106 to 136 (NEYIETKLVIFYAKCDALEIAEVLFSKLRVR), 137 to 171 (NVFSWAAIIGVKCRIGLCEGALMGFVEMLENEIFP), 172 to 206 (DNFVVPNVCKACGALKWSRFGRGVHGYVVKSGLED), 207 to 237 (CVFVASSLADMYGKCGVLDDASKVFDEIPDR), 238 to 272 (NAVAWNALMVGYVQNGKNEEAIRLFSDMRKQGVEP), 273 to 307 (TRVTVSTCLSASANMGGVEEGKQSHAIAIVNGMEL), 308 to 338 (DNILGTSLLNFYCKVGLIEYAEMVFDRMFEK), 339 to 373 (DVVTWNLIISGYVQQGLVEDAIYMCQLMRLEKLKY), 374 to 408 (DCVTLATLMSAAARTENLKLGKEVQCYCIRHSFES), 409 to 439 (DIVLASTVMDMYAKCGSIVDAKKVFDSTVEK), 440 to 474 (DLILWNTLLAAYAESGLSGEALRLFYGMQLEGVPP), 475 to 509 (NVITWNLIILSLLRNGQVDEAKDMFLQMQSSGIIP), 510 to 544 (NLISWTTMMNGMVQNGCSEEAILFLRKMQESGLRP), 545 to 575 (NAFSITVALSACAHLASLHIGRTIHGYIIRN), 581 to 611 (LVSIETSLVDMYAKCGDINKAEKVFGSKLYS), 612 to 646 (ELPLSNAMISAYALYGNLKEAIALYRSLEGVGLKP), 647 to 682 (DNITITNVLSACNHAGDINQAIEIFTDIVSKRSMKP), and 683 to 713 (CLEHYGLMVDLLASAGETEKALRLIEEMPFK). Residues 718-793 (MIQSLVASCN…KPGCSWIQIT (76 aa)) form a type E motif region. Positions 796–826 (EGVHVFVANDKTHTRINEIQMMLALLLYDMG) are type E(+) motif.

Belongs to the PPR family. PCMP-E subfamily.

It is found in the plastid. The protein localises to the chloroplast. Its function is as follows. Plays a major role in chloroplast RNA editing. Acts as a site-recognition transacting factor involved in the edition of the site 2 of ndhD (ndhD-2), which encodes a subunit of the NDH complex. The chain is Pentatricopeptide repeat-containing protein At5g55740, chloroplastic (CRR21) from Arabidopsis thaliana (Mouse-ear cress).